The chain runs to 1069 residues: Leucine--tRNA ligase (1069 aa).

Positions 19–53 (TAEHGTGAANATASPSGAVPPSGATATAGTGDEPG) are disordered. Residues 107–118 (PYPSGTGLHVGH) carry the 'HIGH' region motif. Basic and acidic residues predominate over residues 823 to 836 (GRFTHHGAPVDRRS). The disordered stretch occupies residues 823–846 (GRFTHHGAPVDRRSGKMGKSLKNS). The 'KMSKS' region motif lies at 838-842 (KMGKS). Lys-841 is a binding site for ATP.

It belongs to the class-I aminoacyl-tRNA synthetase family.

It is found in the cytoplasm. The enzyme catalyses tRNA(Leu) + L-leucine + ATP = L-leucyl-tRNA(Leu) + AMP + diphosphate. The sequence is that of Leucine--tRNA ligase from Frankia alni (strain DSM 45986 / CECT 9034 / ACN14a).